The primary structure comprises 273 residues: Rho GTPase-activating protein gacB (273 aa).

One can recognise a Rho-GAP domain in the interval Met1–Phe192.

The protein localises to the cytoplasm. Its function is as follows. Rho GTPase-activating protein involved in the signal transduction pathway. This is Rho GTPase-activating protein gacB (gacB) from Dictyostelium discoideum (Social amoeba).